A 172-amino-acid chain; its full sequence is Adenine phosphoribosyltransferase (172 aa).

This sequence belongs to the purine/pyrimidine phosphoribosyltransferase family. As to quaternary structure, homodimer.

It localises to the cytoplasm. It catalyses the reaction AMP + diphosphate = 5-phospho-alpha-D-ribose 1-diphosphate + adenine. The protein operates within purine metabolism; AMP biosynthesis via salvage pathway; AMP from adenine: step 1/1. Its function is as follows. Catalyzes a salvage reaction resulting in the formation of AMP, that is energically less costly than de novo synthesis. The polypeptide is Adenine phosphoribosyltransferase (Methanococcus maripaludis (strain C7 / ATCC BAA-1331)).